Here is a 419-residue protein sequence, read N- to C-terminus: Vacuolar aspartic protease (419 aa).

The N-terminal stretch at 1-22 is a signal peptide; sequence MQLSLSALTTVALALTSSLVDA. The region spanning 104–415 is the Peptidase A1 domain; the sequence is YFTEIQIGTP…DLDKNAVGLA (312 aa). Asp-122 is a catalytic residue. A disulfide bridge connects residues Cys-135 and Cys-140. Asn-157 carries an N-linked (GlcNAc...) asparagine glycan. Asp-307 is a catalytic residue. A disulfide bridge links Cys-341 with Cys-374. N-linked (GlcNAc...) asparagine glycosylation occurs at Asn-358. Residues 417–419 carry the Microbody targeting signal motif; it reads TKV.

Belongs to the peptidase A1 family.

It localises to the vacuole. The protein is Vacuolar aspartic protease (APR1) of Candida albicans (Yeast).